A 1859-amino-acid chain; its full sequence is Y' element ATP-dependent helicase protein 1 copy 6 (1859 aa).

Residues 861-1038 enclose the Helicase ATP-binding domain; sequence EIYMADTPSV…LQRIGLTGLA (178 aa). 874–881 lines the ATP pocket; sequence APPGYGKT. Residues 1095 to 1244 enclose the Helicase C-terminal domain; sequence KLLLALFEIE…EFYGLESKKG (150 aa). The span at 1318 to 1461 shows a compositional bias: low complexity; the sequence is ANASTNATTN…ATTTESTNAS (144 aa). The tract at residues 1318–1485 is disordered; that stretch reads ANASTNATTN…RFHPVTDINK (168 aa). A compositionally biased stretch (basic and acidic residues) spans 1462–1485; it reads AKEDANKDGNAEDNRFHPVTDINK.

Belongs to the helicase family. Yeast subtelomeric Y' repeat subfamily.

Functionally, catalyzes DNA unwinding and is involved in telomerase-independent telomere maintenance. The chain is Y' element ATP-dependent helicase protein 1 copy 6 (YRF1-6) from Saccharomyces cerevisiae (strain ATCC 204508 / S288c) (Baker's yeast).